The sequence spans 899 residues: MKLDRMRVGSRINDEEAMPLTAPESRARDSIDSSSTASISLTLVEGASHATTEPSKPAHNHNGRTQGNYAEKYRDDLEEDWEENNYIPTNGKSSQRRTLIVFWLLVALCVGGWAVAFLFFVTSPGNKTSTSPHSGSNSPEGDVTKPGIPATGKKIPLDDAIGGVWSPAEHTISWIAGAKGEDGLLLQKSEGGTGPYLHVEDVRNIHGTQSNNNSIVLMKESVFFVNDERISPEKVWPSPDLKTVLAMTREKKNWRHSFTGLYWLFDVETQTAQPLDPDAPNGRIQLATWSPTSDAVAFTRDNNLYIRNLTSKSVKAITTDGGTNLFYGIPDWVYEEEVFEGNIATWWSLDGKYISYLRTNETLVPEFPIDFYLSSPPGYSPKPGEESYPYVQQIKYPKAGAPNPTVSLQFYDIEREESFSVDVKDTLKDDDRLIVEVIPGSKGKVLVRETNRESYIVKVAVIDANKREGKIVRSDNIDEIDGGWVEPSHTTTYIPADPSAGRPDDGYIDTVIHEGYIHLAYFTPLENPKPKMLTTGKWEVVAAPSGVDLKNNVVYFVATKESPIDRHVYSVKLDGSELRMLKDSDKSAYYDVSFSHGAGYMLLKYQGPQIPWQKLISSPSNADNYIEILEENKKLAKLSNEFALPSLHYSTITVDGFELPVVERRPPNFDETKKYPVLFQLYGGPGSQTVNKKFLVNFQTYVASNLGYIVVTVDGRGTGFNGRKFKCIVRRNLGHYEAHDQIQAAKAWGKKPYVDKTRMAIWGWSYGGFMTLKTLEQDAGETFQYGMAVAPVTNWRYYDSVYTERYMHMPQNNEGGYENASISNATNLSQNTRFLIMHGSADDNVHFQNTLTLLDKLDILGVHNYDMHVFPDSNHGIYFHHAYKMVHQRKYFNLSFLGH.

The tract at residues 1-69 (MKLDRMRVGS…NHNGRTQGNY (69 aa)) is disordered. Residues 1–99 (MKLDRMRVGS…NGKSSQRRTL (99 aa)) are Cytoplasmic-facing. Over residues 32–43 (DSSSTASISLTL) the composition is skewed to low complexity. Residues 100 to 120 (IVFWLLVALCVGGWAVAFLFF) traverse the membrane as a helical; Signal-anchor for type II membrane protein segment. At 121-899 (VTSPGNKTST…KYFNLSFLGH (779 aa)) the chain is on the vacuolar side. Residues 128 to 139 (TSTSPHSGSNSP) are compositionally biased toward polar residues. Residues 128–149 (TSTSPHSGSNSPEGDVTKPGIP) form a disordered region. Residues Asn212, Asn308, and Asn360 are each glycosylated (N-linked (GlcNAc...) asparagine). The active-site Charge relay system is Ser765. 3 N-linked (GlcNAc...) asparagine glycosylation sites follow: Asn819, Asn824, and Asn827. Catalysis depends on charge relay system residues Asp842 and His875. Asn893 carries N-linked (GlcNAc...) asparagine glycosylation.

The protein belongs to the peptidase S9B family.

The protein resides in the vacuole membrane. It catalyses the reaction Release of an N-terminal dipeptide, Xaa-Yaa-|-Zaa-, from a polypeptide, preferentially when Yaa is Pro, provided Zaa is neither Pro nor hydroxyproline.. Functionally, type IV dipeptidyl-peptidase which removes N-terminal dipeptides sequentially from polypeptides having unsubstituted N-termini provided that the penultimate residue is proline. This Trichophyton verrucosum (strain HKI 0517) protein is Probable dipeptidyl-aminopeptidase B (DAPB).